The sequence spans 124 residues: Fluoride-specific ion channel FluC 1 (124 aa).

The next 4 membrane-spanning stretches (helical) occupy residues 7–27, 32–52, 58–78, and 93–113; these read IQSKQLYKIFLLIVGSILGAI, LNNYFWVNISGAALLGLIVGL, IQFFLVIGFCGSFTTFSGWIL, and AGLICSNLLGGFTALSVTFWI. Residues G68 and T71 each coordinate Na(+).

Belongs to the fluoride channel Fluc/FEX (TC 1.A.43) family.

It localises to the cell inner membrane. It catalyses the reaction fluoride(in) = fluoride(out). Its activity is regulated as follows. Na(+) is not transported, but it plays an essential structural role and its presence is essential for fluoride channel function. Functionally, fluoride-specific ion channel. Important for reducing fluoride concentration in the cell, thus reducing its toxicity. The sequence is that of Fluoride-specific ion channel FluC 1 from Prochlorococcus marinus (strain SARG / CCMP1375 / SS120).